The chain runs to 114 residues: Phosphoribosyl-AMP cyclohydrolase (114 aa).

A Mg(2+)-binding site is contributed by Asp76. Cys77 is a Zn(2+) binding site. Asp78 and Asp80 together coordinate Mg(2+). Cys93 and Cys100 together coordinate Zn(2+).

This sequence belongs to the PRA-CH family. As to quaternary structure, homodimer. The cofactor is Mg(2+). Zn(2+) is required as a cofactor.

The protein localises to the cytoplasm. The enzyme catalyses 1-(5-phospho-beta-D-ribosyl)-5'-AMP + H2O = 1-(5-phospho-beta-D-ribosyl)-5-[(5-phospho-beta-D-ribosylamino)methylideneamino]imidazole-4-carboxamide. Its pathway is amino-acid biosynthesis; L-histidine biosynthesis; L-histidine from 5-phospho-alpha-D-ribose 1-diphosphate: step 3/9. Catalyzes the hydrolysis of the adenine ring of phosphoribosyl-AMP. The protein is Phosphoribosyl-AMP cyclohydrolase of Streptococcus sanguinis (strain SK36).